The sequence spans 473 residues: FAD-dependent monooxygeanse terM (473 aa).

An N-terminal signal peptide occupies residues 1-22 (MSENFKVLIIGGSVAGLTLALC). FAD is bound by residues Glu-34, Gly-48, Arg-107, Asp-303, and Ala-316. A helical membrane pass occupies residues 441 to 461 (VLYLICGALLAWWASGLVWHF).

Belongs to the paxM FAD-dependent monooxygenase family. The cofactor is FAD.

The protein localises to the membrane. It functions in the pathway secondary metabolite biosynthesis. Functionally, FAD-dependent monooxygeanse; part of the gene cluster that mediates the biosynthesis of terpendoles, indole-diterpene (IDT) mycotoxins including terpendole I, terpendole K, terpendole C, as well as the kinesin Eg5 inhibitor terpendole E. Terpendoles biosynthesis begins with the synthesis of geranylgeranyl diphosphate (GGPP) by a yet unidentified GGPP synthase. Condensation of indole-3-glycerol phosphate with GGPP by the prenyltransferase terC then forms 3-geranylgeranylindole (3-GGI), followed by epoxidation and cyclization of this intermediate (by the FAD-dependent monooxygeanse terM and the terpene cyclase terB) to form paspaline. The cytochrome monooxygenase terQ then hydroxylates paspalline at C-11 to yield terpendole E. The cytochrome monooxygenase terP converts terpendole E to 13-desoxyterpendole I, and terQ converts 13-desoxyterpendole I into terpendole I. TerF and terK are required for conversion of terpendole I to terpendole C which is further converted to terpendole K. The polypeptide is FAD-dependent monooxygeanse terM (Tolypocladium album (Soil fungus)).